The chain runs to 239 residues: 2-C-methyl-D-erythritol 4-phosphate cytidylyltransferase (239 aa).

The protein belongs to the IspD/TarI cytidylyltransferase family. IspD subfamily.

The enzyme catalyses 2-C-methyl-D-erythritol 4-phosphate + CTP + H(+) = 4-CDP-2-C-methyl-D-erythritol + diphosphate. It participates in isoprenoid biosynthesis; isopentenyl diphosphate biosynthesis via DXP pathway; isopentenyl diphosphate from 1-deoxy-D-xylulose 5-phosphate: step 2/6. Its function is as follows. Catalyzes the formation of 4-diphosphocytidyl-2-C-methyl-D-erythritol from CTP and 2-C-methyl-D-erythritol 4-phosphate (MEP). In Ruthia magnifica subsp. Calyptogena magnifica, this protein is 2-C-methyl-D-erythritol 4-phosphate cytidylyltransferase.